The chain runs to 603 residues: Elongation factor 4 (603 aa).

The region spanning 7–191 is the tr-type G domain; the sequence is DNIRNFSIVA…AIVTRLPPPK (185 aa). Residues 19-24 and 138-141 each bind GTP; these read DHGKST and NKVD.

The protein belongs to the TRAFAC class translation factor GTPase superfamily. Classic translation factor GTPase family. LepA subfamily.

It localises to the cell inner membrane. It carries out the reaction GTP + H2O = GDP + phosphate + H(+). Required for accurate and efficient protein synthesis under certain stress conditions. May act as a fidelity factor of the translation reaction, by catalyzing a one-codon backward translocation of tRNAs on improperly translocated ribosomes. Back-translocation proceeds from a post-translocation (POST) complex to a pre-translocation (PRE) complex, thus giving elongation factor G a second chance to translocate the tRNAs correctly. Binds to ribosomes in a GTP-dependent manner. This chain is Elongation factor 4, found in Rhodopseudomonas palustris (strain BisA53).